A 313-amino-acid chain; its full sequence is Acetaldehyde dehydrogenase (313 aa).

Position 15–18 (15–18 (SGNI)) interacts with NAD(+). The Acyl-thioester intermediate role is filled by cysteine 133. NAD(+) is bound by residues 164 to 172 (SAGPGTRAN) and asparagine 289.

This sequence belongs to the acetaldehyde dehydrogenase family.

The catalysed reaction is acetaldehyde + NAD(+) + CoA = acetyl-CoA + NADH + H(+). This Rhizobium rhizogenes (strain K84 / ATCC BAA-868) (Agrobacterium radiobacter) protein is Acetaldehyde dehydrogenase.